Here is a 223-residue protein sequence, read N- to C-terminus: 2-C-methyl-D-erythritol 4-phosphate cytidylyltransferase (223 aa).

Belongs to the IspD/TarI cytidylyltransferase family. IspD subfamily.

It carries out the reaction 2-C-methyl-D-erythritol 4-phosphate + CTP + H(+) = 4-CDP-2-C-methyl-D-erythritol + diphosphate. Its pathway is isoprenoid biosynthesis; isopentenyl diphosphate biosynthesis via DXP pathway; isopentenyl diphosphate from 1-deoxy-D-xylulose 5-phosphate: step 2/6. Catalyzes the formation of 4-diphosphocytidyl-2-C-methyl-D-erythritol from CTP and 2-C-methyl-D-erythritol 4-phosphate (MEP). The chain is 2-C-methyl-D-erythritol 4-phosphate cytidylyltransferase from Prochlorococcus marinus (strain MIT 9301).